The primary structure comprises 590 residues: MDSITSYNVTQMNGDTKQEKCDDVLSTSSTQKFCGGCRKKLRSLLPVNYKTEIVELLKLAGPVFISQLMIFLISFVSTVFCGHLGKTELAGVALAIAVINVTGISIGSGLASACDTLISQTFGSNNLKRVGVILQRGILILLLACFPCWALLINTEPILLAVRQSPNVASLSQLYVKIFMPALPAAFMYQLQGRYLQNQGIIWPQVITGAAGNILNALINYVFLHLLELGVAGSAAANTISQYSLAVFLYVYIRWKNLHKATWDGWSRDCLQEWGAFIRLALPSMLMLCVEWWTYEIGGFLAGLISETELGAQSVVYELATIAYMFPLGFAVAASVRVGNALGAGNTERAKLSAKVALVCGVLVSCVVATLIGCTKDVIAYIFTTEEEIVSRVSQVMIMYGFFHLFDAIAGITGGIVRGAGKQLLGALCNIVGYYFVGFPTGVSLMFALSMGIIGLWIGFFGCVFLQSLFFIILIYKLDWKKATQEALIRAGVQLTETKDESFGLENKGCTEEAAKESQITEEGLTDANTDLEGLSKGGEGISEAGAKTTVGAVLTTKQLIVRRGLAVLLMVLILAGGIVLNEMLVRYLR.

The Cytoplasmic segment spans residues 1–59; the sequence is MDSITSYNVTQMNGDTKQEKCDDVLSTSSTQKFCGGCRKKLRSLLPVNYKTEIVELLKL. A helical membrane pass occupies residues 60 to 80; that stretch reads AGPVFISQLMIFLISFVSTVF. The Extracellular segment spans residues 81–88; that stretch reads CGHLGKTE. The chain crosses the membrane as a helical span at residues 89–109; the sequence is LAGVALAIAVINVTGISIGSG. The Cytoplasmic segment spans residues 110 to 137; the sequence is LASACDTLISQTFGSNNLKRVGVILQRG. A helical membrane pass occupies residues 138–158; that stretch reads ILILLLACFPCWALLINTEPI. Residues 159–167 are Extracellular-facing; it reads LLAVRQSPN. The chain crosses the membrane as a helical span at residues 168-188; sequence VASLSQLYVKIFMPALPAAFM. Residues 189 to 199 are Cytoplasmic-facing; that stretch reads YQLQGRYLQNQ. The helical transmembrane segment at 200-222 threads the bilayer; that stretch reads GIIWPQVITGAAGNILNALINYV. The Extracellular portion of the chain corresponds to 223–231; sequence FLHLLELGV. Residues 232–254 form a helical membrane-spanning segment; it reads AGSAAANTISQYSLAVFLYVYIR. Topologically, residues 255–274 are cytoplasmic; sequence WKNLHKATWDGWSRDCLQEW. The chain crosses the membrane as a helical span at residues 275-294; that stretch reads GAFIRLALPSMLMLCVEWWT. Over 295–313 the chain is Extracellular; it reads YEIGGFLAGLISETELGAQ. The chain crosses the membrane as a helical span at residues 314–334; that stretch reads SVVYELATIAYMFPLGFAVAA. The Cytoplasmic segment spans residues 335–351; it reads SVRVGNALGAGNTERAK. A helical transmembrane segment spans residues 352–372; it reads LSAKVALVCGVLVSCVVATLI. Over 373 to 395 the chain is Extracellular; it reads GCTKDVIAYIFTTEEEIVSRVSQ. Residues 396-416 form a helical membrane-spanning segment; it reads VMIMYGFFHLFDAIAGITGGI. At 417–430 the chain is on the cytoplasmic side; sequence VRGAGKQLLGALCN. Residues 431–451 form a helical membrane-spanning segment; that stretch reads IVGYYFVGFPTGVSLMFALSM. A topological domain (extracellular) is located at residue G452. The chain crosses the membrane as a helical span at residues 453 to 473; the sequence is IIGLWIGFFGCVFLQSLFFII. Residues 474-565 are Cytoplasmic-facing; it reads LIYKLDWKKA…TTKQLIVRRG (92 aa). Residues 566–586 form a helical membrane-spanning segment; it reads LAVLLMVLILAGGIVLNEMLV. Residues 587 to 590 lie on the Extracellular side of the membrane; that stretch reads RYLR.

It belongs to the multi antimicrobial extrusion (MATE) (TC 2.A.66.1) family.

The protein resides in the cell membrane. Solute transporter for tetraethylammonium (TEA), cimetidine, metformin, guanidine, N-methylnicotinamide (NMN) and also the zwitterionic cephalosporin cephalexin. Responsible for the secretion of cationic drugs across the brush border membranes. This Danio rerio (Zebrafish) protein is Multidrug and toxin extrusion protein 1 (slc47a1).